Here is an 873-residue protein sequence, read N- to C-terminus: Coatomer subunit gamma-2 (873 aa).

Positions 1–11 (MIKKFDKKDEE) are enriched in basic and acidic residues. The segment at 1 to 21 (MIKKFDKKDEESGSGSNPFQN) is disordered. 6 HEAT repeats span residues 64-101 (TEATEAFFAMTRLFQSNDQTLRRMCYLTIKEMANISED), 283-320 (RELAPAVSVLQLFCSSPKAALRYAAVRTLNKVAMKHPS), 321-355 (AVTACNLDLENLITDSNRSIATLAITTLLKTGSES), 356-392 (SVDRLMKQISSFVSEISDEFKVVVVQAISALCQKYPR), 394-430 (HSAMMNFLSNMLRDDGGFEYKRAIVDCIISIIEENPE), and 467-504 (PQPSKYIRFIFNRVVLESEAVRAAAVSALAKFGAQNDD).

This sequence belongs to the COPG family. In terms of assembly, oligomeric complex.

It localises to the cytoplasm. It is found in the golgi apparatus membrane. The protein resides in the cytoplasmic vesicle. Its subcellular location is the COPI-coated vesicle membrane. Functionally, the coatomer is a cytosolic protein complex that binds to dilysine motifs and reversibly associates with Golgi non-clathrin-coated vesicles, which further mediate biosynthetic protein transport from the ER, via the Golgi up to the trans Golgi network. Coatomer complex is required for budding from Golgi membranes, and is essential for the retrograde Golgi-to-ER transport of dilysine-tagged proteins. The chain is Coatomer subunit gamma-2 (copg2) from Takifugu rubripes (Japanese pufferfish).